Reading from the N-terminus, the 107-residue chain is MTWTYILRQGDLPPGEMQRYEGGPEPVMVCNVDGEFFAVQDTCTHGDWALSDGYLDGDIVECTLHFGKFCVRTGKVKALPACKPIKVFPIKVEGDEVHVDLDNGELK.

The Rieske domain maps to 4 to 99; the sequence is TYILRQGDLP…IKVEGDEVHV (96 aa). [2Fe-2S] cluster is bound by residues Cys43, His45, Cys62, and His65.

This sequence belongs to the bacterial ring-hydroxylating dioxygenase ferredoxin component family. As to quaternary structure, this dioxygenase system consists of four proteins: the two subunits of the hydroxylase component (todC1 and todC2), a ferredoxin (TodB) and a ferredoxin reductase (TodA).

It participates in xenobiotic degradation; toluene degradation. Its function is as follows. This protein seems to be a 2Fe-2S ferredoxin. This is Toluene 1,2-dioxygenase system ferredoxin subunit (todB) from Pseudomonas putida (strain ATCC 700007 / DSM 6899 / JCM 31910 / BCRC 17059 / LMG 24140 / F1).